The chain runs to 609 residues: Dihydroxy-acid dehydratase 1 (609 aa).

D81 is a Mg(2+) binding site. C122 is a binding site for [2Fe-2S] cluster. Residues D123 and K124 each coordinate Mg(2+). Position 124 is an N6-carboxylysine (K124). C195 provides a ligand contact to [2Fe-2S] cluster. E491 provides a ligand contact to Mg(2+). S517 functions as the Proton acceptor in the catalytic mechanism.

Belongs to the IlvD/Edd family. As to quaternary structure, homodimer. It depends on [2Fe-2S] cluster as a cofactor. Mg(2+) serves as cofactor.

The enzyme catalyses (2R)-2,3-dihydroxy-3-methylbutanoate = 3-methyl-2-oxobutanoate + H2O. It carries out the reaction (2R,3R)-2,3-dihydroxy-3-methylpentanoate = (S)-3-methyl-2-oxopentanoate + H2O. Its pathway is amino-acid biosynthesis; L-isoleucine biosynthesis; L-isoleucine from 2-oxobutanoate: step 3/4. It functions in the pathway amino-acid biosynthesis; L-valine biosynthesis; L-valine from pyruvate: step 3/4. In terms of biological role, functions in the biosynthesis of branched-chain amino acids. Catalyzes the dehydration of (2R,3R)-2,3-dihydroxy-3-methylpentanoate (2,3-dihydroxy-3-methylvalerate) into 2-oxo-3-methylpentanoate (2-oxo-3-methylvalerate) and of (2R)-2,3-dihydroxy-3-methylbutanoate (2,3-dihydroxyisovalerate) into 2-oxo-3-methylbutanoate (2-oxoisovalerate), the penultimate precursor to L-isoleucine and L-valine, respectively. This chain is Dihydroxy-acid dehydratase 1, found in Acinetobacter baylyi (strain ATCC 33305 / BD413 / ADP1).